Reading from the N-terminus, the 86-residue chain is uncharacterized protein (86 aa).

The first 31 residues, 1–31 (MKQKLLLSGLAVSTVGITSYLLKDPSNRQKA), serve as a signal peptide directing secretion. Residues 46–69 (PDMETFPVDKAGHPDPQDIEDNKM) form a disordered region. Basic and acidic residues predominate over residues 55 to 69 (KAGHPDPQDIEDNKM).

This is an uncharacterized protein from Bacillus subtilis (strain 168).